The following is a 324-amino-acid chain: tRNA dimethylallyltransferase (324 aa).

17 to 24 serves as a coordination point for ATP; sequence GPTASGKT. 19 to 24 contacts substrate; it reads TASGKT. 3 interaction with substrate tRNA regions span residues 42-45, 166-170, and 251-256; these read DSAL, QRIQR, and RCVGYR.

Belongs to the IPP transferase family. Monomer. Mg(2+) serves as cofactor.

The enzyme catalyses adenosine(37) in tRNA + dimethylallyl diphosphate = N(6)-dimethylallyladenosine(37) in tRNA + diphosphate. Functionally, catalyzes the transfer of a dimethylallyl group onto the adenine at position 37 in tRNAs that read codons beginning with uridine, leading to the formation of N6-(dimethylallyl)adenosine (i(6)A). This chain is tRNA dimethylallyltransferase, found in Burkholderia pseudomallei (strain 668).